Consider the following 347-residue polypeptide: Glutamyl-Q tRNA(Asp) synthetase (347 aa).

L-glutamate is bound by residues 31-35 (RFAPS) and glutamate 67. The short motif at 34 to 44 (PSPTSALHLGN) is the 'HIGH' region element. Zn(2+) is bound by residues cysteine 121, cysteine 123, tyrosine 143, and cysteine 147. Residues tyrosine 203 and arginine 221 each coordinate L-glutamate. A 'KMSKS' region motif is present at residues 259–263 (RLSKS). Residue lysine 262 coordinates ATP.

This sequence belongs to the class-I aminoacyl-tRNA synthetase family. GluQ subfamily. Zn(2+) is required as a cofactor.

Catalyzes the tRNA-independent activation of glutamate in presence of ATP and the subsequent transfer of glutamate onto a tRNA(Asp). Glutamate is transferred on the 2-amino-5-(4,5-dihydroxy-2-cyclopenten-1-yl) moiety of the queuosine in the wobble position of the QUC anticodon. This chain is Glutamyl-Q tRNA(Asp) synthetase, found in Cutibacterium acnes (strain DSM 16379 / KPA171202) (Propionibacterium acnes).